We begin with the raw amino-acid sequence, 227 residues long: PKHD-type hydroxylase BamMC406_5004 (227 aa).

One can recognise a Fe2OG dioxygenase domain in the interval 80-179 (QVYPPLFNRY…RVASFFWVQS (100 aa)). Positions 98, 100, and 160 each coordinate Fe cation. Arg-170 is a binding site for 2-oxoglutarate.

Requires Fe(2+) as cofactor. L-ascorbate serves as cofactor.

The polypeptide is PKHD-type hydroxylase BamMC406_5004 (Burkholderia ambifaria (strain MC40-6)).